Here is a 511-residue protein sequence, read N- to C-terminus: Glucans biosynthesis protein G (511 aa).

An N-terminal signal peptide occupies residues 1 to 22 (MMKMRWLGAAIMLTLYASSSWA).

Belongs to the OpgD/OpgG family.

It localises to the periplasm. The protein operates within glycan metabolism; osmoregulated periplasmic glucan (OPG) biosynthesis. Its function is as follows. Involved in the biosynthesis of osmoregulated periplasmic glucans (OPGs). This Salmonella enteritidis PT4 (strain P125109) protein is Glucans biosynthesis protein G.